The following is a 1097-amino-acid chain: uncharacterized protein (1097 aa).

Residues 31–1087 adopt a coiled-coil conformation; the sequence is LLNVARQEEE…TALNKLRTRH (1057 aa).

It belongs to the TRAFAC class myosin-kinesin ATPase superfamily. Myosin family. In terms of tissue distribution, specifically expressed in muscles of the head including temporalis and tensor veli palatini.

Its function is as follows. Has most probably lost the function in masticatory muscles contraction suspected for its homologs in dog (AC F1PT61) and apes. This is an uncharacterized protein from Homo sapiens (Human).